We begin with the raw amino-acid sequence, 421 residues long: MGSKDLFQRGSSLFPMGVNSPVRYFKDYPFYVDNASGSRIYDVDGNEYIDYCLAYGPSILGHADPDVVRAVRDQAEKGLIYGAPSEAEIRLGDIIRRSSKNIEMMRFTNSGTEATMHAIRLARAYTGRSIIVKMEGGFHGAHDYSLIRSGSGTLTFGSPSSPGVPEEVARTVVVGRYNDEANIRNIFSQYGSRIAAVITEPIMGNAGVITPEPGFLEFLRDITQKNGSLLIFDEVITGYRFAFSPYQDIIGIRPDLTTMGKIIGGGMPIGLFGGSADIMKKVSPSGDVYQSGTFSGNPVTMAAGFAALKKLQGMDYASLVRRTEKLMNGIDDILAKRKIRHVVNGYRSMFQFFFAESAKNYDEVMKADRDLYFRIFKRLMNHGVYVPPSQFETNFVSFAHSDDDISKTIEAFDLSVGEAAK.

Lys-261 is modified (N6-(pyridoxal phosphate)lysine).

It belongs to the class-III pyridoxal-phosphate-dependent aminotransferase family. HemL subfamily. Pyridoxal 5'-phosphate is required as a cofactor.

The protein localises to the cytoplasm. The catalysed reaction is (S)-4-amino-5-oxopentanoate = 5-aminolevulinate. It participates in porphyrin-containing compound metabolism; protoporphyrin-IX biosynthesis; 5-aminolevulinate from L-glutamyl-tRNA(Glu): step 2/2. This Thermoplasma acidophilum (strain ATCC 25905 / DSM 1728 / JCM 9062 / NBRC 15155 / AMRC-C165) protein is Glutamate-1-semialdehyde 2,1-aminomutase (hemL).